The primary structure comprises 908 residues: Magnesium-transporting ATPase, P-type 1 (908 aa).

Residues 1 to 20 (MTDMNIENRKLNRPASENDK) show a composition bias toward basic and acidic residues. The interval 1-21 (MTDMNIENRKLNRPASENDKQ) is disordered. The Cytoplasmic segment spans residues 1 to 80 (MTDMNIENRK…QVPPALIQLL (80 aa)). A helical membrane pass occupies residues 81–101 (QAFNNPFIYVLMALAGVSFIT). At 102–113 (DYWLPLRRGEET) the chain is on the extracellular side. Residues 114 to 134 (DLTGVLIILTMVSLSGLLRFW) form a helical membrane-spanning segment. Over 135–293 (QEFRTNRAAQ…QTAFDRGVNS (159 aa)) the chain is Cytoplasmic. The helical transmembrane segment at 294 to 314 (VSWLLIRFMLIMVPVVLLING) threads the bilayer. At 315–323 (FSKGDWVEA) the chain is on the extracellular side. A helical transmembrane segment spans residues 324–341 (SLFALAVAVGLTPEMLPM). Glutamate 337 lines the Mg(2+) pocket. Over 342-704 (IVSSNLAKGA…IKGRETFGNI (363 aa)) the chain is Cytoplasmic. The active-site 4-aspartylphosphate intermediate is aspartate 379. Residues aspartate 650, aspartate 654, and asparagine 718 each contribute to the Mg(2+) site. The chain crosses the membrane as a helical span at residues 705–724 (IKYLNMTASSNFGNVFSVLV). The Extracellular segment spans residues 725 to 733 (ASAFIPFLP). A helical transmembrane segment spans residues 734–753 (MLAIHLLIQNLMYDISQLSL). Asparagine 743 and aspartate 747 together coordinate Mg(2+). The Cytoplasmic segment spans residues 754–775 (PWDKMDKEFLRKPRKWDAKNIG). Residues 776–799 (RFMLWIGPTSSIFDITTFALMWYV) traverse the membrane as a helical segment. The Extracellular segment spans residues 800–808 (FAANNVEAQ). The helical transmembrane segment at 809-827 (ALFQSGWFIEGLLSQTLVV) threads the bilayer. The Cytoplasmic segment spans residues 828–840 (HMLRTQKIPFIQS). A helical membrane pass occupies residues 841-860 (RATLPVLLTTGLIMAIGIYI). The Extracellular segment spans residues 861 to 875 (PFSPLGAMVGLEPLP). Residues 876-895 (LSYFPWLVATLLSYCLVAQG) form a helical membrane-spanning segment. The Cytoplasmic portion of the chain corresponds to 896 to 908 (MKRFYIKRFGQWF).

It belongs to the cation transport ATPase (P-type) (TC 3.A.3) family. Type IIIB subfamily.

The protein resides in the cell inner membrane. The enzyme catalyses Mg(2+)(out) + ATP + H2O = Mg(2+)(in) + ADP + phosphate + H(+). Mediates magnesium influx to the cytosol. This Salmonella typhimurium (strain LT2 / SGSC1412 / ATCC 700720) protein is Magnesium-transporting ATPase, P-type 1 (mgtB).